Consider the following 84-residue polypeptide: Small ribosomal subunit protein bS18 (84 aa).

It belongs to the bacterial ribosomal protein bS18 family. Part of the 30S ribosomal subunit. Forms a tight heterodimer with protein bS6.

Functionally, binds as a heterodimer with protein bS6 to the central domain of the 16S rRNA, where it helps stabilize the platform of the 30S subunit. This chain is Small ribosomal subunit protein bS18, found in Ruthia magnifica subsp. Calyptogena magnifica.